A 157-amino-acid chain; its full sequence is uncharacterized protein (157 aa).

This sequence to E.coli YcjD and H.influenzae HI_0925.

This is an uncharacterized protein from Haemophilus influenzae (strain ATCC 51907 / DSM 11121 / KW20 / Rd).